The sequence spans 346 residues: Acetylserotonin O-methyltransferase (346 aa).

Residues Y148, W165, D211, 236–238 (GDF), and K253 contribute to the S-adenosyl-L-methionine site. H256 (proton donor/acceptor) is an active-site residue. Substrate-binding residues include D257, N303, and Q307.

This sequence belongs to the class I-like SAM-binding methyltransferase superfamily. Cation-independent O-methyltransferase family. Homodimer. In terms of tissue distribution, expressed in pineal gland and retina.

The enzyme catalyses N-acetylserotonin + S-adenosyl-L-methionine = melatonin + S-adenosyl-L-homocysteine + H(+). It participates in aromatic compound metabolism; melatonin biosynthesis; melatonin from serotonin: step 1/2. Functionally, catalyzes the transfer of a methyl group onto N-acetylserotonin, producing melatonin (N-acetyl-5-methoxytryptamine). This is Acetylserotonin O-methyltransferase (ASMT) from Gallus gallus (Chicken).